Consider the following 838-residue polypeptide: G-protein coupled receptor-associated sorting protein 2 (838 aa).

4 disordered regions span residues 1 to 122, 218 to 292, 349 to 368, and 531 to 552; these read MTGA…GARP, ASNE…SNPF, RFRH…RAQK, and LELS…PSPE. The span at 13–31 shows a compositional bias: basic and acidic residues; it reads KPEKKAGEEVIAGPEREND. A compositionally biased stretch (polar residues) spans 220-245; it reads NESGFWSADETSTASSFWTGEETSVR. A compositionally biased stretch (basic residues) spans 255-271; sequence RSRHRAKHQTNPRSRPR. Phosphoserine is present on residues Ser282 and Ser284. Residues 542–552 show a composition bias toward polar residues; it reads SLLQPDQPSPE.

It belongs to the GPRASP family. As to quaternary structure, interacts with cytoplasmic tails of a variety of G-protein coupled receptors such as muscarinic acetylcholine receptor M1/CHRM1 and calcitonin receptor/CALCR. In terms of tissue distribution, expressed in the brain.

Functionally, may play a role in regulation of a variety of G-protein coupled receptors. In Homo sapiens (Human), this protein is G-protein coupled receptor-associated sorting protein 2 (GPRASP2).